A 247-amino-acid polypeptide reads, in one-letter code: Ribonuclease 3 (247 aa).

The region spanning 21 to 149 (LQKLSKKIGI…LVGAIYLDQG (129 aa)) is the RNase III domain. Position 62 (E62) interacts with Mg(2+). D66 is a catalytic residue. The Mg(2+) site is built by N135 and E138. Residue E138 is part of the active site. Residues 176-245 (DYKTQLQEYS…AKELYNRIRK (70 aa)) form the DRBM domain.

This sequence belongs to the ribonuclease III family. As to quaternary structure, homodimer. Requires Mg(2+) as cofactor.

Its subcellular location is the cytoplasm. The catalysed reaction is Endonucleolytic cleavage to 5'-phosphomonoester.. In terms of biological role, digests double-stranded RNA. Involved in the processing of primary rRNA transcript to yield the immediate precursors to the large and small rRNAs (23S and 16S). Processes some mRNAs, and tRNAs when they are encoded in the rRNA operon. Processes pre-crRNA and tracrRNA of type II CRISPR loci if present in the organism. The protein is Ribonuclease 3 of Leptospira interrogans serogroup Icterohaemorrhagiae serovar copenhageni (strain Fiocruz L1-130).